We begin with the raw amino-acid sequence, 303 residues long: Porphobilinogen deaminase (303 aa).

An S-(dipyrrolylmethanemethyl)cysteine modification is found at C241.

Belongs to the HMBS family. Monomer. Dipyrromethane is required as a cofactor.

The catalysed reaction is 4 porphobilinogen + H2O = hydroxymethylbilane + 4 NH4(+). The protein operates within porphyrin-containing compound metabolism; protoporphyrin-IX biosynthesis; coproporphyrinogen-III from 5-aminolevulinate: step 2/4. It participates in porphyrin-containing compound metabolism; chlorophyll biosynthesis. In terms of biological role, tetrapolymerization of the monopyrrole PBG into the hydroxymethylbilane pre-uroporphyrinogen in several discrete steps. This is Porphobilinogen deaminase from Roseiflexus sp. (strain RS-1).